Consider the following 179-residue polypeptide: Acireductone dioxygenase (179 aa).

Fe(2+) is bound by residues His-88, His-90, Glu-94, and His-133. Residues His-88, His-90, Glu-94, and His-133 each contribute to the Ni(2+) site.

The protein belongs to the acireductone dioxygenase (ARD) family. As to quaternary structure, monomer. Interacts with MMP14. Fe(2+) serves as cofactor. Requires Ni(2+) as cofactor.

It localises to the cytoplasm. It is found in the nucleus. Its subcellular location is the cell membrane. It catalyses the reaction 1,2-dihydroxy-5-(methylsulfanyl)pent-1-en-3-one + O2 = 4-methylsulfanyl-2-oxobutanoate + formate + 2 H(+). The enzyme catalyses 1,2-dihydroxy-5-(methylsulfanyl)pent-1-en-3-one + O2 = 3-(methylsulfanyl)propanoate + CO + formate + 2 H(+). It functions in the pathway amino-acid biosynthesis; L-methionine biosynthesis via salvage pathway; L-methionine from S-methyl-5-thio-alpha-D-ribose 1-phosphate: step 5/6. In terms of biological role, catalyzes 2 different reactions between oxygen and the acireductone 1,2-dihydroxy-3-keto-5-methylthiopentene (DHK-MTPene) depending upon the metal bound in the active site. Fe-containing acireductone dioxygenase (Fe-ARD) produces formate and 2-keto-4-methylthiobutyrate (KMTB), the alpha-ketoacid precursor of methionine in the methionine recycle pathway. Ni-containing acireductone dioxygenase (Ni-ARD) produces methylthiopropionate, carbon monoxide and formate, and does not lie on the methionine recycle pathway. Also down-regulates cell migration mediated by MMP14. This is Acireductone dioxygenase from Macaca mulatta (Rhesus macaque).